We begin with the raw amino-acid sequence, 471 residues long: Trigger factor (471 aa).

The region spanning 166-245 (DDFITIDINA…LTAVKVRELP (80 aa)) is the PPIase FKBP-type domain. The interval 442–471 (AAGVTGEDDDTEAEEERVTVSADDPGAARF) is disordered. Residues 447–456 (GEDDDTEAEE) are compositionally biased toward acidic residues.

Belongs to the FKBP-type PPIase family. Tig subfamily.

The protein localises to the cytoplasm. The enzyme catalyses [protein]-peptidylproline (omega=180) = [protein]-peptidylproline (omega=0). Involved in protein export. Acts as a chaperone by maintaining the newly synthesized protein in an open conformation. Functions as a peptidyl-prolyl cis-trans isomerase. The chain is Trigger factor from Renibacterium salmoninarum (strain ATCC 33209 / DSM 20767 / JCM 11484 / NBRC 15589 / NCIMB 2235).